Reading from the N-terminus, the 613-residue chain is Dihydroxy-acid dehydratase (613 aa).

Asp-81 is a Mg(2+) binding site. Residue Cys-122 participates in [2Fe-2S] cluster binding. Asp-123 and Lys-124 together coordinate Mg(2+). The residue at position 124 (Lys-124) is an N6-carboxylysine. Cys-193 provides a ligand contact to [2Fe-2S] cluster. Glu-489 provides a ligand contact to Mg(2+). Residue Ser-515 is the Proton acceptor of the active site.

The protein belongs to the IlvD/Edd family. In terms of assembly, homodimer. It depends on [2Fe-2S] cluster as a cofactor. The cofactor is Mg(2+).

It carries out the reaction (2R)-2,3-dihydroxy-3-methylbutanoate = 3-methyl-2-oxobutanoate + H2O. The catalysed reaction is (2R,3R)-2,3-dihydroxy-3-methylpentanoate = (S)-3-methyl-2-oxopentanoate + H2O. The protein operates within amino-acid biosynthesis; L-isoleucine biosynthesis; L-isoleucine from 2-oxobutanoate: step 3/4. It participates in amino-acid biosynthesis; L-valine biosynthesis; L-valine from pyruvate: step 3/4. Functions in the biosynthesis of branched-chain amino acids. Catalyzes the dehydration of (2R,3R)-2,3-dihydroxy-3-methylpentanoate (2,3-dihydroxy-3-methylvalerate) into 2-oxo-3-methylpentanoate (2-oxo-3-methylvalerate) and of (2R)-2,3-dihydroxy-3-methylbutanoate (2,3-dihydroxyisovalerate) into 2-oxo-3-methylbutanoate (2-oxoisovalerate), the penultimate precursor to L-isoleucine and L-valine, respectively. This Pseudomonas fluorescens (strain Pf0-1) protein is Dihydroxy-acid dehydratase.